Consider the following 117-residue polypeptide: Large ribosomal subunit protein uL18 (117 aa).

The protein belongs to the universal ribosomal protein uL18 family. In terms of assembly, part of the 50S ribosomal subunit; part of the 5S rRNA/L5/L18/L25 subcomplex. Contacts the 5S and 23S rRNAs.

In terms of biological role, this is one of the proteins that bind and probably mediate the attachment of the 5S RNA into the large ribosomal subunit, where it forms part of the central protuberance. This chain is Large ribosomal subunit protein uL18, found in Azoarcus sp. (strain BH72).